We begin with the raw amino-acid sequence, 87 residues long: Potassium channel toxin Ttr-beta-KTx (87 aa).

The signal sequence occupies residues 1–19 (MERKWALLLFLGMVTLVSC). A propeptide spanning residues 20–27 (GLREKHVQ) is cleaved from the precursor. The 35-residue stretch at 53-87 (QFGCPAYEGYCNNHCQDIKRKDGECHGFKCKCAKD) folds into the BetaSPN-type CS-alpha/beta domain. 3 disulfide bridges follow: Cys56–Cys77, Cys63–Cys82, and Cys67–Cys84.

It belongs to the long chain scorpion toxin family. Class 1 subfamily. Expressed by the venom gland.

It is found in the secreted. In terms of biological role, inhibits voltage-gated potassium channel. This is Potassium channel toxin Ttr-beta-KTx from Tityus trivittatus (Argentinean scorpion).